The following is a 408-amino-acid chain: Serine/threonine transporter SstT (408 aa).

9 consecutive transmembrane segments (helical) span residues 14 to 34 (GNLILQICIGIVLGILIGIFS), 43 to 63 (IFGALFTGALKAIAPILVFIL), 83 to 103 (IIFLYIFGTFLASLSAVSISF), 143 to 163 (ALSSGNYLSILAWAIGGGFAL), 181 to 201 (VLKIVKFIVKLAPFGIFGLVA), 219 to 239 (LIILVLTMFFVAFVINALIVF), 247 to 269 (YPLIFICLKHSAVFAFFTRSSAA), 290 to 310 (ISIPLGATINMAGAAVTIAIL), and 332 to 352 (VLAAFAACGASGVAGGSLLLI).

The protein belongs to the dicarboxylate/amino acid:cation symporter (DAACS) (TC 2.A.23) family.

Its subcellular location is the cell inner membrane. The enzyme catalyses L-serine(in) + Na(+)(in) = L-serine(out) + Na(+)(out). The catalysed reaction is L-threonine(in) + Na(+)(in) = L-threonine(out) + Na(+)(out). Its function is as follows. Involved in the import of serine and threonine into the cell, with the concomitant import of sodium (symport system). The polypeptide is Serine/threonine transporter SstT (Campylobacter lari (strain RM2100 / D67 / ATCC BAA-1060)).